A 283-amino-acid chain; its full sequence is MSGTDRSQAAGAVPDSDPGLAAVSSAYQRFEPRAYLRNNYAPPRGDLSCPDGVGPWKLRCLAQTFATGEVSGRTLIDIGSGPTIYQLLSACAHFEDITMTDFLEVNRQELRLWLREEPGAFDWSVYSQHVCLIEGKGESWQEKECQLRARVKRILPIDVHRPQPLGAGGLAPLPADALVSAFCLEAVSPDLASFQRALDHITTLLRPGGHLLLIGALEESWYLAGEARLAVVPVREEEVREALVRTATRCGICARTPMPAHLQTGVDDVKGIFFTRAQKKVGV.

S7 carries the post-translational modification Phosphoserine. S-adenosyl-L-methionine is bound by residues Y35, Y40, 79–80 (GS), Y85, D101, N106, 158–159 (DV), and A181. Octopamine is bound by residues E219 and D267.

It belongs to the class I-like SAM-binding methyltransferase superfamily. NNMT/PNMT/TEMT family. In terms of processing, the N-terminus is blocked. As to expression, expressed in the adrenal medulla.

The catalysed reaction is phenylethanolamine + S-adenosyl-L-methionine = N-methylphenylethanolamine + S-adenosyl-L-homocysteine + H(+). It carries out the reaction (R)-noradrenaline + S-adenosyl-L-methionine = (R)-adrenaline + S-adenosyl-L-homocysteine + H(+). The enzyme catalyses (R)-normetanephrine + S-adenosyl-L-methionine = (R)-metanephrine + S-adenosyl-L-homocysteine + H(+). It catalyses the reaction (R)-octopamine + S-adenosyl-L-methionine = (R)-synephrine + S-adenosyl-L-homocysteine + H(+). It participates in catecholamine biosynthesis; (R)-adrenaline biosynthesis; (R)-adrenaline from (R)-noradrenaline: step 1/1. Its activity is regulated as follows. Inhibited by p-hydroxymercuribenzoate and p-chloromercuriphenylsulfonate. Functionally, catalyzes the transmethylation of nonepinephrine (noradrenaline) to form epinephrine (adrenaline), using S-adenosyl-L-methionine as the methyl donor. Other substrates include phenylethanolamine and octopamine. Also methylates normetanephrine. This is Phenylethanolamine N-methyltransferase (PNMT) from Bos taurus (Bovine).